The sequence spans 544 residues: Chaperonin GroEL 1 (544 aa).

Residues 29-32 (TLGP), 86-90 (DGTTT), G413, 476-478 (NAA), and D492 contribute to the ATP site. The interval 523 to 544 (EPVKAPAGGGDMDGMGGMGGMM) is disordered. Residues 529-544 (AGGGDMDGMGGMGGMM) are compositionally biased toward gly residues.

Belongs to the chaperonin (HSP60) family. In terms of assembly, forms a cylinder of 14 subunits composed of two heptameric rings stacked back-to-back. Interacts with the co-chaperonin GroES.

Its subcellular location is the cytoplasm. The enzyme catalyses ATP + H2O + a folded polypeptide = ADP + phosphate + an unfolded polypeptide.. Together with its co-chaperonin GroES, plays an essential role in assisting protein folding. The GroEL-GroES system forms a nano-cage that allows encapsulation of the non-native substrate proteins and provides a physical environment optimized to promote and accelerate protein folding. In Cutibacterium acnes (strain DSM 16379 / KPA171202) (Propionibacterium acnes), this protein is Chaperonin GroEL 1.